The primary structure comprises 300 residues: uncharacterized protein (300 aa).

Positions 67–179 (LAFEELEKEK…IAKANELKDS (113 aa)) form a coiled coil. Residues 203–285 (STTASLSQSE…PSSQSTYQQQ (83 aa)) show a composition bias toward low complexity. Residues 203 to 300 (STTASLSQSE…KGFFARLFNL (98 aa)) are disordered.

This is an uncharacterized protein from Staphylococcus epidermidis (strain ATCC 12228 / FDA PCI 1200).